The primary structure comprises 1700 residues: MELSCSEVPLYGQRTVYAKFGKNVYLPEDAEFYFIYDGSHQRHVVIADRVEDNVLQSIIPGHWLQETVMVSVCLCSEGYSPVTMGSGSVTYVDNMACRLARLLVTQADRLTPCSHQTLLTPFALTAEALPALDEELVLALTQLELPLGWTVLGNSSLEVCLHRESLLHLAVRWALPKLFHFLLCLPGGVKALELPNEEATTPLDLALHGGHSMLVEDISNFQGRRSPGFSRLRLNEDATLQFDRSSETLTLTVNHTAEHLLEADIKLFRKYFWDRAFLVKALDQEAKTERATMPSGAAETEEEVRNLESGRSPSEEEEDGQLVKSQADGPSEQEDQDRLVLDHSFDGLKKSKHAPASLAAGQLSDVPNGGDEVYANCMVIDQVGDLDINYINIEGLSTHTSPESMRSTLGPQACKHILPPDTSPCGHLLCEDSDRTLDAAASQSCMSPPSSHTSNLNLSFGLHGFVKEQSHLKKRSSSLDALVADSEEEGRSEPPICYAVGSQSSPRTGLPGGDELDSFDANTEPDCNISRTESLSLSSTLHSKESLLSGIRSRSYSCSSPKISSGKSRLVRDFTVCSSSEEQRSYSFQEPPGEKRIQEEEWDDYIIPAKAESEKHKVSRTFSFLMNRMTSPRNKSKMKNKDTKDKEKLNRHQFVPGTFSGVLQCSGCDKTLLGKESLQCANCKANTHKGCKDTVPPCTKKFQDKYNKNKPQTILGSSSVRDVPPPGLSLHPSPSMPIGLPAGRKETAGQAHPLSRSVPGTTLESFRRAVTSLESEGDSNSWRSRSHSDELFQSMGSSPSTESFMMEDVVDSSLWSELSSDAQEFEAESWSLVVDPSFCSRQEKDVIKRQDVIFELMQTEVHHIQTLLIMSEVFRKGMKEELQLDHSTVDRIFPCLDELLETHKHFFFSMKERRQESCTGNDRNFVINQIGDILVQQFSEENASKMKRIYGDFCSHHKEAMSLFKELQQNKKFQNFIKIRNSNLLARRRGIPECILLVTQRITKYPVLVERILQYTKERTEEHRDLCRALGLIKDMIAAVDLKVSEYEKNQKWLEILNKIENKTYTKLKNGHVFRKQALMSQERALLHDGLVYWKTATGRFKDILALLLTDVLLFLQEKDQKYIFAAVDQKPSVISLQKLIAREVANEERGMFLISASSAGPEMYEIHTSSKEERNNWMRRIQQAVESCPEEEGGRTSESDEERRKADARVAKIQQCQEILSNQDQQICTYLEEKLHIYAELGELSGFEDVHLEPHLLIKPDPGEPPQAASLLAAALREAESLQVAVKASKLADVSQPSEEGPGGAVLADTLSAQDAPASPTAFTEGTEGRGCWDVDPRLQGVVTDLAVSDAGEKVEYRSFSGSSQSEIIQAIQNLTRLLYSLQAALTIQDSHIEIHKLVLQQQESLAPSHSFRGGPLQDQEKSRYLEKHREELANIHKLQYQFQQEQRRWHRTCDQQQREQEAQESWLQARERECQSQEELLLRHRSELDHQLQEYQQNLERLREGQRMVERERQRMRDQQGLLGHCKHSRQRSLPAVFSPGSKEVTELNRAESLCHEKSFFLNDAFTHMSLNTSNKPNPSGAPWDAHPPGGSHLDLARTSDSQIEVKMDVSQPSDVNSELWTTGLGPQRPARQESIKDSCKNVADLNSFQTESPDPQDSNQRGPQPQTLITEAKLTPPMAAGHGGDAGDGAEENIVYL.

The interval 288–335 (TERATMPSGAAETEEEVRNLESGRSPSEEEEDGQLVKSQADGPSEQED) is disordered. 3 positions are modified to phosphoserine: serine 312, serine 314, and serine 478. A disordered region spans residues 483-525 (VADSEEEGRSEPPICYAVGSQSSPRTGLPGGDELDSFDANTEP). Phosphoserine is present on serine 623. The segment at 651-698 (RHQFVPGTFSGVLQCSGCDKTLLGKESLQCANCKANTHKGCKDTVPPC) adopts a Phorbol-ester/DAG-type zinc-finger fold. Residues 709-720 (NKPQTILGSSSV) are compositionally biased toward polar residues. Disordered stretches follow at residues 709-761 (NKPQ…VPGT) and 774-799 (ESEGDSNSWRSRSHSDELFQSMGSSP). Over residues 728 to 737 (LSLHPSPSMP) the composition is skewed to low complexity. Polar residues predominate over residues 774 to 783 (ESEGDSNSWR). The 196-residue stretch at 848 to 1043 (KRQDVIFELM…KDMIAAVDLK (196 aa)) folds into the DH domain. One can recognise a PH domain in the interval 1085–1187 (ALLHDGLVYW…WMRRIQQAVE (103 aa)). The tract at residues 1186 to 1207 (VESCPEEEGGRTSESDEERRKA) is disordered. The segment covering 1193 to 1207 (EGGRTSESDEERRKA) has biased composition (basic and acidic residues). Residues 1294 to 1303 (DVSQPSEEGP) form an interaction with PTK2/FAK1; required for regulation of axonal branching and synapse formation region. The segment at 1369–1380 (IIQAIQNLTRLL) is mediates cytoplasmic retention and interaction with YWHAH. Residues 1421 to 1700 (QEKSRYLEKH…DGAEENIVYL (280 aa)) are interaction with microtubules. The stretch at 1473–1522 (ERECQSQEELLLRHRSELDHQLQEYQQNLERLREGQRMVERERQRMRDQQ) forms a coiled coil. Residues 1493–1524 (QLQEYQQNLERLREGQRMVERERQRMRDQQGL) are RNA-binding. Phosphoserine is present on serine 1535. The interval 1563–1576 (FLNDAFTHMSLNTS) is mediates cytoplasmic retention and interaction with MAPK8IP1. The tract at residues 1574-1598 (NTSNKPNPSGAPWDAHPPGGSHLDL) is disordered. At serine 1604 the chain carries Phosphoserine. Positions 1612–1700 (VSQPSDVNSE…DGAEENIVYL (89 aa)) are disordered. The segment covering 1613–1623 (SQPSDVNSELW) has biased composition (polar residues). Residues 1633-1642 (ARQESIKDSC) show a composition bias toward basic and acidic residues. Positions 1647–1672 (DLNSFQTESPDPQDSNQRGPQPQTLI) are enriched in polar residues.

As to quaternary structure, homooligomer; forms cytoplasmic aggregates. Forms a complex with MAPK8 and MAPK8IP1. Interacts with RHOA. Interacts with microtubules. Interacts with YWHAE and YWHAH. Interacts with PTK2/FAK1. Interacts with NEFL. Interacts with CTNND2; prevents interaction with RHOA. Phosphorylated on tyrosine upon stimulation of cells by laminin.

It localises to the cytoplasm. It is found in the cell membrane. Functions as a RHOA-specific guanine nucleotide exchange factor regulating signaling pathways downstream of integrins and growth factor receptors. Functions in axonal branching, synapse formation and dendritic morphogenesis. Also functions in focal adhesion formation, cell motility and B-lymphocytes activation. May regulate NEFL expression and aggregation and play a role in apoptosis. This is Rho guanine nucleotide exchange factor 28 (Arhgef28) from Rattus norvegicus (Rat).